Reading from the N-terminus, the 174-residue chain is Large ribosomal subunit protein uL10 (174 aa).

The protein belongs to the universal ribosomal protein uL10 family. In terms of assembly, part of the ribosomal stalk of the 50S ribosomal subunit. The N-terminus interacts with L11 and the large rRNA to form the base of the stalk. The C-terminus forms an elongated spine to which L12 dimers bind in a sequential fashion forming a multimeric L10(L12)X complex.

Functionally, forms part of the ribosomal stalk, playing a central role in the interaction of the ribosome with GTP-bound translation factors. In Anaeromyxobacter dehalogenans (strain 2CP-1 / ATCC BAA-258), this protein is Large ribosomal subunit protein uL10.